The following is a 480-amino-acid chain: ATP synthase subunit beta, chloroplastic (480 aa).

Residue 161–168 (GGAGVGKT) coordinates ATP.

The protein belongs to the ATPase alpha/beta chains family. In terms of assembly, F-type ATPases have 2 components, CF(1) - the catalytic core - and CF(0) - the membrane proton channel. CF(1) has five subunits: alpha(3), beta(3), gamma(1), delta(1), epsilon(1). CF(0) has four main subunits: a(1), b(1), b'(1) and c(9-12).

Its subcellular location is the plastid. The protein resides in the chloroplast thylakoid membrane. It catalyses the reaction ATP + H2O + 4 H(+)(in) = ADP + phosphate + 5 H(+)(out). Functionally, produces ATP from ADP in the presence of a proton gradient across the membrane. The catalytic sites are hosted primarily by the beta subunits. In Euglena gracilis, this protein is ATP synthase subunit beta, chloroplastic.